The chain runs to 338 residues: Anthranilate phosphoribosyltransferase (338 aa).

5-phospho-alpha-D-ribose 1-diphosphate contacts are provided by residues Gly81, 84-85 (GD), Thr89, 91-94 (NVST), 109-117 (KHGNRSVSS), and Ser121. Gly81 lines the anthranilate pocket. A Mg(2+)-binding site is contributed by Ser93. An anthranilate-binding site is contributed by Asn112. Arg167 is a binding site for anthranilate. Mg(2+) is bound by residues Asp226 and Glu227.

This sequence belongs to the anthranilate phosphoribosyltransferase family. Homodimer. Mg(2+) is required as a cofactor.

It catalyses the reaction N-(5-phospho-beta-D-ribosyl)anthranilate + diphosphate = 5-phospho-alpha-D-ribose 1-diphosphate + anthranilate. It participates in amino-acid biosynthesis; L-tryptophan biosynthesis; L-tryptophan from chorismate: step 2/5. Catalyzes the transfer of the phosphoribosyl group of 5-phosphorylribose-1-pyrophosphate (PRPP) to anthranilate to yield N-(5'-phosphoribosyl)-anthranilate (PRA). This is Anthranilate phosphoribosyltransferase from Alkalilimnicola ehrlichii (strain ATCC BAA-1101 / DSM 17681 / MLHE-1).